Consider the following 287-residue polypeptide: tRNA-cytidine(32) 2-sulfurtransferase (287 aa).

Residues 39 to 44 (SGGKDS) carry the PP-loop motif motif. Residues cysteine 114, cysteine 117, and cysteine 205 each coordinate [4Fe-4S] cluster.

The protein belongs to the TtcA family. In terms of assembly, homodimer. Requires Mg(2+) as cofactor. [4Fe-4S] cluster serves as cofactor.

Its subcellular location is the cytoplasm. The catalysed reaction is cytidine(32) in tRNA + S-sulfanyl-L-cysteinyl-[cysteine desulfurase] + AH2 + ATP = 2-thiocytidine(32) in tRNA + L-cysteinyl-[cysteine desulfurase] + A + AMP + diphosphate + H(+). Its pathway is tRNA modification. Functionally, catalyzes the ATP-dependent 2-thiolation of cytidine in position 32 of tRNA, to form 2-thiocytidine (s(2)C32). The sulfur atoms are provided by the cysteine/cysteine desulfurase (IscS) system. The sequence is that of tRNA-cytidine(32) 2-sulfurtransferase from Dechloromonas aromatica (strain RCB).